An 840-amino-acid chain; its full sequence is Mechanosensitive ion channel protein Msy2 (840 aa).

Residues 1–68 (MNEHRREPHR…WFNNLSFITR (68 aa)) lie on the Cytoplasmic side of the membrane. Residues 69-89 (WITIWFPLAGALVIPLAVGVS) form a helical membrane-spanning segment. Over 90–100 (PYPNAKLGGVR) the chain is Lumenal. A helical transmembrane segment spans residues 101–121 (IFWIFVWLEVAWGGFWVSRVI). Residues 122 to 126 (ARLLP) are Cytoplasmic-facing. A helical membrane pass occupies residues 127 to 147 (YILYPLMGILPFTMYKYTVIL). The Lumenal segment spans residues 148–151 (TALE). Residues 152–172 (MPLAIFFCSIVCVCTFSPIMI) traverse the membrane as a helical segment. The Cytoplasmic segment spans residues 173–225 (GKGNFTSTTVTTTTSATATPTASASSNAVESVFVTKTAASVPSWIKVITKILG). A helical membrane pass occupies residues 226–246 (AAVVTSIVLLLEKIFLHFIGF). The Lumenal portion of the chain corresponds to 247-449 (HYHEVQYQYR…LALGKLDRVG (203 aa)). An EF-hand domain is found at 392–427 (IPDDEINDIFHILDNDYSRTVTLDEMEQFTREISIE). A helical membrane pass occupies residues 450–491 (LGVVGIIAVLTFISFLDTSFATILAAFGTTLLSLSFVFSTSA). Over 492-840 (QELMSSIIFL…SQNMDGQIQY (349 aa)) the chain is Cytoplasmic. 2 disordered regions span residues 677-730 (EYSK…KRED) and 775-819 (ESNG…NTQA). Residues 688-700 (SDISSTASSNSLS) are compositionally biased toward low complexity. Positions 708–730 (SESRNYHTHDEDNSSDDNHKRED) are enriched in basic and acidic residues. The segment covering 776–819 (SNGNANGDNTATNSQGATDNGQTTTNTTQNNVDNTQATTDNTQA) has biased composition (low complexity).

This sequence belongs to the MscS (TC 1.A.23) family.

It localises to the endoplasmic reticulum membrane. Regulates intracellular calcium levels and cell volume for survival in response to hypo-osmotic shock. Involved in maintaining vacuole integrity and protecting the nuclear envelope upon hypo-osmotic shock. The protein is Mechanosensitive ion channel protein Msy2 of Schizosaccharomyces pombe (strain 972 / ATCC 24843) (Fission yeast).